The primary structure comprises 132 residues: MVMTDPIADMLTRIRNANMVRHEKMELPASNIKREIAEILKREGFIRDVEYIEDAKQGTLRLFLKYGASNERVITGLKRISKPGLRVYAKADEVPKVLGGLGIAVLSTSKGLMTDKEARQQQVGGEVIAYIW.

The protein belongs to the universal ribosomal protein uS8 family. Part of the 30S ribosomal subunit. Contacts proteins S5 and S12.

Its function is as follows. One of the primary rRNA binding proteins, it binds directly to 16S rRNA central domain where it helps coordinate assembly of the platform of the 30S subunit. This chain is Small ribosomal subunit protein uS8, found in Exiguobacterium sp. (strain ATCC BAA-1283 / AT1b).